Here is a 150-residue protein sequence, read N- to C-terminus: Macrodomain Ter protein (150 aa).

The protein belongs to the MatP family. In terms of assembly, homodimer.

It localises to the cytoplasm. Its function is as follows. Required for spatial organization of the terminus region of the chromosome (Ter macrodomain) during the cell cycle. Prevents early segregation of duplicated Ter macrodomains during cell division. Binds specifically to matS, which is a 13 bp signature motif repeated within the Ter macrodomain. In Shigella boydii serotype 18 (strain CDC 3083-94 / BS512), this protein is Macrodomain Ter protein.